We begin with the raw amino-acid sequence, 163 residues long: Large ribosomal subunit protein uL10 (163 aa).

It belongs to the universal ribosomal protein uL10 family. As to quaternary structure, part of the ribosomal stalk of the 50S ribosomal subunit. The N-terminus interacts with L11 and the large rRNA to form the base of the stalk. The C-terminus forms an elongated spine to which L12 dimers bind in a sequential fashion forming a multimeric L10(L12)X complex.

Functionally, forms part of the ribosomal stalk, playing a central role in the interaction of the ribosome with GTP-bound translation factors. The protein is Large ribosomal subunit protein uL10 of Haemophilus ducreyi (strain 35000HP / ATCC 700724).